We begin with the raw amino-acid sequence, 250 residues long: ATP synthase subunit a (250 aa).

A run of 5 helical transmembrane segments spans residues 27–47 (TDTV…AFYL), 83–103 (IAPF…ISNW), 129–149 (INYV…AGIW), 191–211 (IFAG…IMWA), and 219–239 (FDLF…ILYF).

This sequence belongs to the ATPase A chain family. As to quaternary structure, F-type ATPases have 2 components, CF(1) - the catalytic core - and CF(0) - the membrane proton channel. CF(1) has five subunits: alpha(3), beta(3), gamma(1), delta(1), epsilon(1). CF(0) has three main subunits: a(1), b(2) and c(9-12). The alpha and beta chains form an alternating ring which encloses part of the gamma chain. CF(1) is attached to CF(0) by a central stalk formed by the gamma and epsilon chains, while a peripheral stalk is formed by the delta and b chains.

It localises to the cell membrane. Its function is as follows. Key component of the proton channel; it plays a direct role in the translocation of protons across the membrane. In Mycobacterium marinum (strain ATCC BAA-535 / M), this protein is ATP synthase subunit a.